The primary structure comprises 970 residues: MGDYHEFTDQYKVPVIAKLLHALPHYNITFHKINSTFRPNDEIYLESLGILGSVPAALLIVSLLGLLFYLMTRCCDRKPRPAHSITSLKVALSIVTVMCCAAIGLGLYGNDDLHNGLLEVLTAGRKVDNLVTTIRNQTHILENTLTNRIRPQLVELADIFDQPVSNQTALSKLFVSLNIVQGNVTLATNAASDIRRPLMGISMTHFLTRGDQWELIRWPGTVATLALLLVLCAVLLVGVARHSRCALILFSVCGLLAVTGSWLMSGLYLSSSVAVGDLCISPADFLVSTAPRDLPTNVLLHYTQCEPGHTNPFTQRLRESQNSLNNARSAMATVMKISLVLFKSSGLQPKLGAVNADLNSSERLLTQLTALVDCKAVHHNFLAAARGLCEGGLLGLVLMLIASFIAAILLTIMVWVDSHTWIYIRKRNDYAQVDEPSYISHPAPQNHQQMMNAARTLPRNHNGHFSPPVISGSHTLQHPSKRQQHEMMAHAHIQQNMRAMGTHTLGRLPSHNHSPTHMTGPNNAAAVAAAANAAANMPPTTQAAQQQQQQQAQQQQQQAQQQLGGPQPIYCHHPHQHPHPHPHQHPHSHSAAAVAAAVQHQHAIYHQQQAQQYGTYTTAAHHAPHHLGPGQSQIYQQIPAHLAPQLAANGNPHSIYQPLVAVSQGSIYVSNMATMRRQNSQGGPQIPAHQHPPSLHQQQQQPPPPSQQQQQLHQLKSPQQHQQQLQQHQQQQQQQHHQQQHHQQQHQQQQQQHHQQQQPNESDVVPISTAMDTAIYDRDKQIYKCSTLRQGGKFDPKYKPSILNCPLPEIPKDAEQPKVESIYEQRQQAHHQNYSKTLQRPPMMLPPQMKAIPPPRIGTPTSPPPPVAQPLNESNGGVPSGLQNGGAVVGGGGANANEDTSLPPPPLEAQTEATKARMGAGPAANGKVLHNGGGGGSVGGGGGGAVDDDDDLPPPPPAITDESNYAVTEL.

At 1-47 (MGDYHEFTDQYKVPVIAKLLHALPHYNITFHKINSTFRPNDEIYLES) the chain is on the extracellular side. 2 N-linked (GlcNAc...) asparagine glycosylation sites follow: asparagine 27 and asparagine 34. Residues 48 to 68 (LGILGSVPAALLIVSLLGLLF) traverse the membrane as a helical segment. At 69–89 (YLMTRCCDRKPRPAHSITSLK) the chain is on the cytoplasmic side. Residues 90–110 (VALSIVTVMCCAAIGLGLYGN) traverse the membrane as a helical segment. Residues 111 to 219 (DDLHNGLLEV…GDQWELIRWP (109 aa)) are Extracellular-facing. N-linked (GlcNAc...) asparagine glycosylation is found at asparagine 136, asparagine 166, and asparagine 183. A helical transmembrane segment spans residues 220 to 240 (GTVATLALLLVLCAVLLVGVA). Residues 241–246 (RHSRCA) lie on the Cytoplasmic side of the membrane. The helical transmembrane segment at 247-267 (LILFSVCGLLAVTGSWLMSGL) threads the bilayer. The Extracellular portion of the chain corresponds to 268–395 (YLSSSVAVGD…RGLCEGGLLG (128 aa)). An N-linked (GlcNAc...) asparagine glycan is attached at asparagine 359. Residues 396 to 416 (LVLMLIASFIAAILLTIMVWV) form a helical membrane-spanning segment. The Cytoplasmic portion of the chain corresponds to 417 to 970 (DSHTWIYIRK…DESNYAVTEL (554 aa)). Positions 532–571 (NAAANMPPTTQAAQQQQQQQAQQQQQQAQQQLGGPQPIYC) are enriched in low complexity. Disordered regions lie at residues 532–587 (NAAA…QHPH), 677–763 (RQNS…NESD), and 849–970 (MKAI…VTEL). Over residues 572 to 587 (HHPHQHPHPHPHQHPH) the composition is skewed to basic residues. Low complexity-rich tracts occupy residues 689 to 700 (HQHPPSLHQQQQ), 707 to 737 (QQQQQLHQLKSPQQHQQQLQQHQQQQQQQHH), and 745 to 759 (QHQQQQQQHHQQQQP). The span at 852-868 (IPPPRIGTPTSPPPPVA) shows a compositional bias: pro residues. Composition is skewed to gly residues over residues 883-894 (QNGGAVVGGGGA) and 931-945 (NGGGGGSVGGGGGGA). Residues 961–970 (DESNYAVTEL) are compositionally biased toward polar residues.

It belongs to the tweety family.

Its subcellular location is the cell membrane. Its function is as follows. Non-essential protein that probably acts as a chloride channel. In Drosophila melanogaster (Fruit fly), this protein is Protein tweety (tty).